Reading from the N-terminus, the 404-residue chain is Aspergillopepsin-1 (404 aa).

The signal sequence occupies residues 1-20; that stretch reads MVILSKVAAVAVGLSTVASA. The propeptide at 21 to 77 is activation peptide; sequence LPTGPSHSPHARRGFTINQITRQTARVGPKTASFPAIYSRALAKYGGTVPAHLKSAV. Positions 95–401 constitute a Peptidase A1 domain; the sequence is YLTPVNIGGT…DSQGPRLGFA (307 aa). Residue aspartate 111 is part of the active site. An N-linked (GlcNAc...) asparagine glycan is attached at asparagine 140. Aspartate 293 is a catalytic residue. An intrachain disulfide couples cysteine 329 to cysteine 364.

Belongs to the peptidase A1 family. In terms of assembly, monomer.

It localises to the secreted. It carries out the reaction Hydrolysis of proteins with broad specificity. Generally favors hydrophobic residues in P1 and P1', but also accepts Lys in P1, which leads to activation of trypsinogen. Does not clot milk.. Secreted aspartic endopeptidase that allows assimilation of proteinaceous substrates. The scissile peptide bond is attacked by a nucleophilic water molecule activated by two aspartic residues in the active site. Shows a broad primary substrate specificity. Favors hydrophobic residues at the P1 and P1' positions, but also accepts a lysine residue in the P1 position, leading to the activation of trypsinogen and chymotrypsinogen A. This Aspergillus flavus (strain ATCC 200026 / FGSC A1120 / IAM 13836 / NRRL 3357 / JCM 12722 / SRRC 167) protein is Aspergillopepsin-1 (pepA).